Here is a 495-residue protein sequence, read N- to C-terminus: MRINPTTSGPAVSTLDEKNLGHIAQIIGPVLDVVFPPGKMPNIYNALVVKGRDTVGQQINVTCEVQQLLGNNRVRAVAMSATDGLTRGMEVIDTGAPLSVPVGGATLGRIFNVLGEPVDNLGPVDTRTTSPIHRSAPAFIQLDTKLSIFETGIKVVDLLAPYRRGGKIGLFGGAGVGKTVLIMELINNIAKAHGGVSVFGGVGERTREGNDLYMEMKESGVINEKNIAESKVALVYGQMNEPPGARMRVGLTALTMAEYFRDVNEQDVLLFIDNIFRFVQAGSEVSALLGRMPSAVGYQPTLSTEMGSLQERITSTKEGSITSIQAVYVPADDLTDPAPATTFAHLDATTVLSRGLAAKGIYPAVDPLDSTSTMLQPGIVGEEHYETAQKVKQTSQRYKELQDIIAILGLDELSEEDRLTVARARKIERFLSQPFFVAEVFTGSPGKYVGLAETVRGFQLILSGELDSLPEQAFYLVGNIDEATAKAMNLEGENK.

172 to 179 (GGAGVGKT) is a binding site for ATP.

This sequence belongs to the ATPase alpha/beta chains family. As to quaternary structure, F-type ATPases have 2 components, CF(1) - the catalytic core - and CF(0) - the membrane proton channel. CF(1) has five subunits: alpha(3), beta(3), gamma(1), delta(1), epsilon(1). CF(0) has four main subunits: a(1), b(1), b'(1) and c(9-12).

The protein resides in the plastid. Its subcellular location is the chloroplast thylakoid membrane. It catalyses the reaction ATP + H2O + 4 H(+)(in) = ADP + phosphate + 5 H(+)(out). Its function is as follows. Produces ATP from ADP in the presence of a proton gradient across the membrane. The catalytic sites are hosted primarily by the beta subunits. In Beaucarnea recurvata (Elephant-foot tree), this protein is ATP synthase subunit beta, chloroplastic.